We begin with the raw amino-acid sequence, 305 residues long: Glycine cleavage system transcriptional activator (305 aa).

Residues proline 6–threonine 63 enclose the HTH lysR-type domain. A DNA-binding region (H-T-H motif) is located at residues phenylalanine 23–lysine 42.

The protein belongs to the LysR transcriptional regulatory family.

Its subcellular location is the cytoplasm. Regulatory protein for the glycine cleavage system operon (gcv). Mediates activation of gcv by glycine and repression by purines. GcvA is negatively autoregulated. Binds to three sites upstream of the gcv promoter. This is Glycine cleavage system transcriptional activator (gcvA) from Escherichia coli O157:H7.